Reading from the N-terminus, the 254-residue chain is Pyruvate dehydrogenase complex repressor (254 aa).

An HTH gntR-type domain is found at 9–77 (PKLSDVIEQQ…QGGGTFVQSS (69 aa)). The H-T-H motif DNA-binding region spans 37-56 (ERELAKQFDVSRPSLREAIQ).

In terms of biological role, transcriptional repressor for the pyruvate dehydrogenase complex genes aceEF and lpd. The polypeptide is Pyruvate dehydrogenase complex repressor (pdhR) (Salmonella typhi).